The sequence spans 442 residues: Trigger factor (442 aa).

Residues 162–247 form the PPIase FKBP-type domain; sequence GDRMTFDFEG…VKAIESRELP (86 aa).

It belongs to the FKBP-type PPIase family. Tig subfamily.

It is found in the cytoplasm. It catalyses the reaction [protein]-peptidylproline (omega=180) = [protein]-peptidylproline (omega=0). Functionally, involved in protein export. Acts as a chaperone by maintaining the newly synthesized protein in an open conformation. Functions as a peptidyl-prolyl cis-trans isomerase. The sequence is that of Trigger factor from Magnetococcus marinus (strain ATCC BAA-1437 / JCM 17883 / MC-1).